The chain runs to 142 residues: Peptide methionine sulfoxide reductase MsrB (142 aa).

The region spanning 2 to 125 is the MsrB domain; sequence IKKNKNDLNE…NSAAVQFIPY (124 aa). The active-site Nucleophile is the C114.

Belongs to the MsrB Met sulfoxide reductase family.

The enzyme catalyses L-methionyl-[protein] + [thioredoxin]-disulfide + H2O = L-methionyl-(R)-S-oxide-[protein] + [thioredoxin]-dithiol. In Staphylococcus saprophyticus subsp. saprophyticus (strain ATCC 15305 / DSM 20229 / NCIMB 8711 / NCTC 7292 / S-41), this protein is Peptide methionine sulfoxide reductase MsrB.